Here is a 436-residue protein sequence, read N- to C-terminus: 3-ketoacyl-CoA thiolase (436 aa).

Catalysis depends on C99, which acts as the Acyl-thioester intermediate. Residues H392 and C422 each act as proton acceptor in the active site.

It belongs to the thiolase-like superfamily. Thiolase family. As to quaternary structure, heterotetramer of two alpha chains (FadJ) and two beta chains (FadI).

It is found in the cytoplasm. It catalyses the reaction an acyl-CoA + acetyl-CoA = a 3-oxoacyl-CoA + CoA. Its pathway is lipid metabolism; fatty acid beta-oxidation. In terms of biological role, catalyzes the final step of fatty acid oxidation in which acetyl-CoA is released and the CoA ester of a fatty acid two carbons shorter is formed. This chain is 3-ketoacyl-CoA thiolase, found in Shewanella sp. (strain W3-18-1).